Here is a 363-residue protein sequence, read N- to C-terminus: 5-formaminoimidazole-4-carboxamide-1-(beta)-D-ribofuranosyl 5'-monophosphate synthetase (363 aa).

2 residues coordinate 5-amino-1-(5-phospho-beta-D-ribosyl)imidazole-4-carboxamide: His29 and Ser96. Positions Arg118–Lys354 constitute an ATP-grasp domain. ATP is bound by residues Pro148–Cys210 and Glu232. Position 260 (Asn260) interacts with 5-amino-1-(5-phospho-beta-D-ribosyl)imidazole-4-carboxamide. Mg(2+) is bound by residues Gln299 and Glu312.

Belongs to the phosphohexose mutase family. Mg(2+) serves as cofactor. It depends on Mn(2+) as a cofactor.

The catalysed reaction is 5-amino-1-(5-phospho-beta-D-ribosyl)imidazole-4-carboxamide + formate + ATP = 5-formamido-1-(5-phospho-D-ribosyl)imidazole-4-carboxamide + ADP + phosphate. It functions in the pathway purine metabolism; IMP biosynthesis via de novo pathway; 5-formamido-1-(5-phospho-D-ribosyl)imidazole-4-carboxamide from 5-amino-1-(5-phospho-D-ribosyl)imidazole-4-carboxamide (formate route): step 1/1. Catalyzes the ATP- and formate-dependent formylation of 5-aminoimidazole-4-carboxamide-1-beta-d-ribofuranosyl 5'-monophosphate (AICAR) to 5-formaminoimidazole-4-carboxamide-1-beta-d-ribofuranosyl 5'-monophosphate (FAICAR) in the absence of folates. The chain is 5-formaminoimidazole-4-carboxamide-1-(beta)-D-ribofuranosyl 5'-monophosphate synthetase from Methanobrevibacter smithii (strain ATCC 35061 / DSM 861 / OCM 144 / PS).